The following is a 705-amino-acid chain: DNA ligase (705 aa).

NAD(+) is bound by residues 43–47 (DAEYD), 92–93 (SL), and Asp-123. Lys-125 functions as the N6-AMP-lysine intermediate in the catalytic mechanism. The NAD(+) site is built by Arg-146, Glu-184, Lys-304, and Lys-328. Residues Cys-422, Cys-425, Cys-440, and Cys-445 each coordinate Zn(2+). The BRCT domain occupies 607 to 696 (TPVTPLAGKK…EEISGQAADD (90 aa)). Residues 684–705 (SESEEISGQAADDYENSLLRVQ) are disordered.

It belongs to the NAD-dependent DNA ligase family. LigA subfamily. Requires Mg(2+) as cofactor. Mn(2+) is required as a cofactor.

The catalysed reaction is NAD(+) + (deoxyribonucleotide)n-3'-hydroxyl + 5'-phospho-(deoxyribonucleotide)m = (deoxyribonucleotide)n+m + AMP + beta-nicotinamide D-nucleotide.. DNA ligase that catalyzes the formation of phosphodiester linkages between 5'-phosphoryl and 3'-hydroxyl groups in double-stranded DNA using NAD as a coenzyme and as the energy source for the reaction. It is essential for DNA replication and repair of damaged DNA. The protein is DNA ligase of Oleidesulfovibrio alaskensis (strain ATCC BAA-1058 / DSM 17464 / G20) (Desulfovibrio alaskensis).